Consider the following 340-residue polypeptide: Ketol-acid reductoisomerase (NADP(+)) (340 aa).

In terms of domain architecture, KARI N-terminal Rossmann spans 3–183 (INVYYDKDCD…GGGRTGIIET (181 aa)). Residues 26–29 (FGSQ), S54, and 84–87 (DELQ) contribute to the NADP(+) site. H109 is an active-site residue. Residue G135 coordinates NADP(+). The region spanning 184–329 (TFKDETETDL…KKLRAMMPWI (146 aa)) is the KARI C-terminal knotted domain. Positions 192, 196, 228, and 232 each coordinate Mg(2+). S253 lines the substrate pocket.

The protein belongs to the ketol-acid reductoisomerase family. The cofactor is Mg(2+).

The enzyme catalyses (2R)-2,3-dihydroxy-3-methylbutanoate + NADP(+) = (2S)-2-acetolactate + NADPH + H(+). It carries out the reaction (2R,3R)-2,3-dihydroxy-3-methylpentanoate + NADP(+) = (S)-2-ethyl-2-hydroxy-3-oxobutanoate + NADPH + H(+). The protein operates within amino-acid biosynthesis; L-isoleucine biosynthesis; L-isoleucine from 2-oxobutanoate: step 2/4. It functions in the pathway amino-acid biosynthesis; L-valine biosynthesis; L-valine from pyruvate: step 2/4. Its function is as follows. Involved in the biosynthesis of branched-chain amino acids (BCAA). Catalyzes an alkyl-migration followed by a ketol-acid reduction of (S)-2-acetolactate (S2AL) to yield (R)-2,3-dihydroxy-isovalerate. In the isomerase reaction, S2AL is rearranged via a Mg-dependent methyl migration to produce 3-hydroxy-3-methyl-2-ketobutyrate (HMKB). In the reductase reaction, this 2-ketoacid undergoes a metal-dependent reduction by NADPH to yield (R)-2,3-dihydroxy-isovalerate. This chain is Ketol-acid reductoisomerase (NADP(+)), found in Campylobacter concisus (strain 13826).